A 242-amino-acid polypeptide reads, in one-letter code: Type III pantothenate kinase (242 aa).

Residue 7-14 coordinates ATP; it reads DLGNSRFK. Substrate contacts are provided by residues Tyr91 and 98-101; that span reads GVDR. The active-site Proton acceptor is the Asp100. An ATP-binding site is contributed by Thr121. Residue Thr171 participates in substrate binding.

Belongs to the type III pantothenate kinase family. As to quaternary structure, homodimer. NH4(+) serves as cofactor. K(+) is required as a cofactor.

Its subcellular location is the cytoplasm. It catalyses the reaction (R)-pantothenate + ATP = (R)-4'-phosphopantothenate + ADP + H(+). It functions in the pathway cofactor biosynthesis; coenzyme A biosynthesis; CoA from (R)-pantothenate: step 1/5. Its function is as follows. Catalyzes the phosphorylation of pantothenate (Pan), the first step in CoA biosynthesis. The protein is Type III pantothenate kinase of Xylella fastidiosa (strain M23).